The following is a 194-amino-acid chain: Peptidyl-tRNA hydrolase (194 aa).

Y16 contributes to the tRNA binding site. H21 functions as the Proton acceptor in the catalytic mechanism. The tRNA site is built by F67, N69, and N115.

The protein belongs to the PTH family. Monomer.

Its subcellular location is the cytoplasm. The catalysed reaction is an N-acyl-L-alpha-aminoacyl-tRNA + H2O = an N-acyl-L-amino acid + a tRNA + H(+). Hydrolyzes ribosome-free peptidyl-tRNAs (with 1 or more amino acids incorporated), which drop off the ribosome during protein synthesis, or as a result of ribosome stalling. Functionally, catalyzes the release of premature peptidyl moieties from peptidyl-tRNA molecules trapped in stalled 50S ribosomal subunits, and thus maintains levels of free tRNAs and 50S ribosomes. The polypeptide is Peptidyl-tRNA hydrolase (Citrobacter koseri (strain ATCC BAA-895 / CDC 4225-83 / SGSC4696)).